The sequence spans 397 residues: Tryptophan synthase beta chain (397 aa).

Lys87 carries the post-translational modification N6-(pyridoxal phosphate)lysine.

The protein belongs to the TrpB family. In terms of assembly, tetramer of two alpha and two beta chains. Pyridoxal 5'-phosphate is required as a cofactor.

The enzyme catalyses (1S,2R)-1-C-(indol-3-yl)glycerol 3-phosphate + L-serine = D-glyceraldehyde 3-phosphate + L-tryptophan + H2O. It participates in amino-acid biosynthesis; L-tryptophan biosynthesis; L-tryptophan from chorismate: step 5/5. The beta subunit is responsible for the synthesis of L-tryptophan from indole and L-serine. This Escherichia coli O45:K1 (strain S88 / ExPEC) protein is Tryptophan synthase beta chain.